Here is a 394-residue protein sequence, read N- to C-terminus: Chaperone protein DnaJ (394 aa).

The J domain occupies Asp4–Gly68. Residues Gly136–Thr218 form a CR-type zinc finger. Positions 149, 152, 166, 169, 192, 195, 206, and 209 each coordinate Zn(2+). CXXCXGXG motif repeat units follow at residues Cys149–Gly156, Cys166–Gly173, Cys192–Gly199, and Cys206–Gly213.

It belongs to the DnaJ family. As to quaternary structure, homodimer. It depends on Zn(2+) as a cofactor.

Its subcellular location is the cytoplasm. Functionally, participates actively in the response to hyperosmotic and heat shock by preventing the aggregation of stress-denatured proteins and by disaggregating proteins, also in an autonomous, DnaK-independent fashion. Unfolded proteins bind initially to DnaJ; upon interaction with the DnaJ-bound protein, DnaK hydrolyzes its bound ATP, resulting in the formation of a stable complex. GrpE releases ADP from DnaK; ATP binding to DnaK triggers the release of the substrate protein, thus completing the reaction cycle. Several rounds of ATP-dependent interactions between DnaJ, DnaK and GrpE are required for fully efficient folding. Also involved, together with DnaK and GrpE, in the DNA replication of plasmids through activation of initiation proteins. This chain is Chaperone protein DnaJ, found in Synechococcus sp. (strain JA-3-3Ab) (Cyanobacteria bacterium Yellowstone A-Prime).